Reading from the N-terminus, the 727-residue chain is Translation initiation factor IF-2, mitochondrial (727 aa).

A mitochondrion-targeting transit peptide spans 1–29 (MNQKLLKLENLLRFHTIYRQLHSLCQRRA). One can recognise a tr-type G domain in the interval 178–348 (PRSPVVTIMG…VALAEMLELK (171 aa)). The segment at 187–194 (GHVDHGKT) is G1. A GTP-binding site is contributed by 187–194 (GHVDHGKT). The tract at residues 212 to 216 (GITQH) is G2. GTP is bound by residues 234 to 237 (DTPG) and 288 to 291 (NKCD). The G3 stretch occupies residues 234-237 (DTPG). Residues 288-291 (NKCD) form a G4 region. The tract at residues 324 to 326 (SAL) is G5. At Thr-688 the chain carries Phosphothreonine.

The protein belongs to the TRAFAC class translation factor GTPase superfamily. Classic translation factor GTPase family. IF-2 subfamily. As to quaternary structure, monomer. In terms of tissue distribution, expressed in all tissues examined. Highest level in skeletal muscle.

The protein localises to the mitochondrion. Its function is as follows. One of the essential components for the initiation of protein synthesis. Protects formylmethionyl-tRNA from spontaneous hydrolysis and promotes its binding to the 30S ribosomal subunits. Also involved in the hydrolysis of GTP during the formation of the 70S ribosomal complex. The sequence is that of Translation initiation factor IF-2, mitochondrial (MTIF2) from Homo sapiens (Human).